The following is a 92-amino-acid chain: Bombyxin A-3 (92 aa).

A signal peptide spans 1–19 (MKILLAIALMLSTVMWVST). Position 20 is a pyrrolidone carboxylic acid (Gln-20). Cystine bridges form between Cys-29–Cys-79, Cys-41–Cys-92, and Cys-78–Cys-83. The propeptide at 50-70 (SDAQYVSYGSAWLMPYSEGRG) is c peptide like.

It belongs to the insulin family. In terms of assembly, heterodimer of a B chain and an A chain linked by two disulfide bonds.

Its subcellular location is the secreted. Its function is as follows. Brain peptide responsible for activation of prothoracic glands to produce ecdysone in insects. This chain is Bombyxin A-3 (BBXA3), found in Bombyx mori (Silk moth).